Consider the following 166-residue polypeptide: Putative pre-16S rRNA nuclease (166 aa).

Residues 1-24 (MPDTAAPTPDRPGPDDPGRGRRLG) form a disordered region.

Belongs to the YqgF nuclease family.

It localises to the cytoplasm. In terms of biological role, could be a nuclease involved in processing of the 5'-end of pre-16S rRNA. The chain is Putative pre-16S rRNA nuclease from Mycobacteroides abscessus (strain ATCC 19977 / DSM 44196 / CCUG 20993 / CIP 104536 / JCM 13569 / NCTC 13031 / TMC 1543 / L948) (Mycobacterium abscessus).